Here is a 525-residue protein sequence, read N- to C-terminus: Bifunctional purine biosynthesis protein PurH (525 aa).

The 149-residue stretch at 1–149 (MSDPVIKRAL…KNNESVTVVT (149 aa)) folds into the MGS-like domain.

It belongs to the PurH family.

The catalysed reaction is (6R)-10-formyltetrahydrofolate + 5-amino-1-(5-phospho-beta-D-ribosyl)imidazole-4-carboxamide = 5-formamido-1-(5-phospho-D-ribosyl)imidazole-4-carboxamide + (6S)-5,6,7,8-tetrahydrofolate. It carries out the reaction IMP + H2O = 5-formamido-1-(5-phospho-D-ribosyl)imidazole-4-carboxamide. The protein operates within purine metabolism; IMP biosynthesis via de novo pathway; 5-formamido-1-(5-phospho-D-ribosyl)imidazole-4-carboxamide from 5-amino-1-(5-phospho-D-ribosyl)imidazole-4-carboxamide (10-formyl THF route): step 1/1. It functions in the pathway purine metabolism; IMP biosynthesis via de novo pathway; IMP from 5-formamido-1-(5-phospho-D-ribosyl)imidazole-4-carboxamide: step 1/1. This chain is Bifunctional purine biosynthesis protein PurH, found in Pelodictyon phaeoclathratiforme (strain DSM 5477 / BU-1).